The following is an 84-amino-acid chain: Sporulation-specific transcription factor SpoVIF (84 aa).

The protein localises to the cytoplasm. In terms of biological role, transcription factor involved in spore coat assembly and spore resistance. Required for gene regulation during the latter stages of sporulation. Regulates the transcription of at least cgeA, cotG and cotS. May directly or indirectly control the function of the GerE protein. The polypeptide is Sporulation-specific transcription factor SpoVIF (Bacillus subtilis (strain 168)).